A 294-amino-acid chain; its full sequence is N-acetylmuramic acid 6-phosphate etherase (294 aa).

The SIS domain occupies 56 to 219; the sequence is TSYSLRNGGR…STLSMVSVGK (164 aa). Glutamate 84 serves as the catalytic Proton donor. Glutamate 115 is an active-site residue.

This sequence belongs to the GCKR-like family. MurNAc-6-P etherase subfamily. In terms of assembly, homodimer.

It catalyses the reaction N-acetyl-D-muramate 6-phosphate + H2O = N-acetyl-D-glucosamine 6-phosphate + (R)-lactate. It participates in amino-sugar metabolism; 1,6-anhydro-N-acetylmuramate degradation. The protein operates within amino-sugar metabolism; N-acetylmuramate degradation. It functions in the pathway cell wall biogenesis; peptidoglycan recycling. Functionally, specifically catalyzes the cleavage of the D-lactyl ether substituent of MurNAc 6-phosphate, producing GlcNAc 6-phosphate and D-lactate. Together with AnmK, is also required for the utilization of anhydro-N-acetylmuramic acid (anhMurNAc) either imported from the medium or derived from its own cell wall murein, and thus plays a role in cell wall recycling. This is N-acetylmuramic acid 6-phosphate etherase from Francisella tularensis subsp. tularensis (strain SCHU S4 / Schu 4).